The following is a 253-amino-acid chain: Mediator of RNA polymerase II transcription subunit 19 (253 aa).

2 disordered regions span residues 18-49 and 157-253; these read EQYS…TLKT and GPLP…TQVF. Over residues 21-40 the composition is skewed to low complexity; it reads SPKSSPRAGGAGGRSPVVAR. 2 stretches are compositionally biased toward basic residues: residues 165–183 and 220–233; these read HLKS…KHKY and RKKR…KKQR.

Belongs to the Mediator complex subunit 19 family. In terms of assembly, component of the Mediator complex.

The protein resides in the nucleus. Its function is as follows. Component of the Mediator complex, a coactivator involved in the regulated transcription of nearly all RNA polymerase II-dependent genes. Mediator functions as a bridge to convey information from gene-specific regulatory proteins to the basal RNA polymerase II transcription machinery. Mediator is recruited to promoters by direct interactions with regulatory proteins and serves as a scaffold for the assembly of a functional preinitiation complex with RNA polymerase II and the general transcription factors. This chain is Mediator of RNA polymerase II transcription subunit 19 (MED19), found in Aedes aegypti (Yellowfever mosquito).